A 107-amino-acid polypeptide reads, in one-letter code: UPF0060 membrane protein RPD_3084 (107 aa).

4 consecutive transmembrane segments (helical) span residues 5 to 25, 31 to 51, 59 to 79, and 85 to 105; these read IIYVCAALAEIAGCFAFWGWL, VWWLLPGMLSLAAFAYLLTLV, AYASYGGIYIVASLVWLWSVE, and RWDVTGGCVCLIGAAIILWGP.

It belongs to the UPF0060 family.

It localises to the cell inner membrane. The sequence is that of UPF0060 membrane protein RPD_3084 from Rhodopseudomonas palustris (strain BisB5).